A 269-amino-acid polypeptide reads, in one-letter code: Phosphonoacetaldehyde hydrolase (269 aa).

Residue Asp-10 is the Nucleophile of the active site. The Mg(2+) site is built by Asp-10 and Ala-12. The active-site Schiff-base intermediate with substrate is Lys-52. A Mg(2+)-binding site is contributed by Asp-186.

It belongs to the HAD-like hydrolase superfamily. PhnX family. As to quaternary structure, homodimer. Mg(2+) is required as a cofactor.

It carries out the reaction phosphonoacetaldehyde + H2O = acetaldehyde + phosphate + H(+). In terms of biological role, involved in phosphonate degradation. The protein is Phosphonoacetaldehyde hydrolase of Salmonella heidelberg (strain SL476).